A 215-amino-acid chain; its full sequence is Probable transaldolase (215 aa).

Lysine 83 acts as the Schiff-base intermediate with substrate in catalysis.

Belongs to the transaldolase family. Type 3B subfamily.

It localises to the cytoplasm. It catalyses the reaction D-sedoheptulose 7-phosphate + D-glyceraldehyde 3-phosphate = D-erythrose 4-phosphate + beta-D-fructose 6-phosphate. Its pathway is carbohydrate degradation; pentose phosphate pathway; D-glyceraldehyde 3-phosphate and beta-D-fructose 6-phosphate from D-ribose 5-phosphate and D-xylulose 5-phosphate (non-oxidative stage): step 2/3. Transaldolase is important for the balance of metabolites in the pentose-phosphate pathway. The sequence is that of Probable transaldolase from Streptococcus agalactiae serotype III (strain NEM316).